Here is a 383-residue protein sequence, read N- to C-terminus: Embryonic pepsinogen (383 aa).

The first 16 residues, 1 to 16 (MRSLALLCAVLALSDG), serve as a signal peptide directing secretion. The Peptidase A1 domain maps to 76-380 (YYGTISIGTP…DRANNRVGLA (305 aa)). The active site involves Asp94. An intrachain disulfide couples Cys107 to Cys112. N-linked (GlcNAc...) asparagine glycans are attached at residues Asn132 and Asn204. Cys267 and Cys271 are oxidised to a cystine. Asp276 is an active-site residue. N-linked (GlcNAc...) asparagine glycosylation occurs at Asn309. Cys310 and Cys344 are joined by a disulfide. An N-linked (GlcNAc...) asparagine glycan is attached at Asn350.

It belongs to the peptidase A1 family.

The polypeptide is Embryonic pepsinogen (Gallus gallus (Chicken)).